The following is a 563-amino-acid chain: Putative GMC-type oxidoreductase L128 (563 aa).

The signal sequence occupies residues 1–21; it reads MTSSIVLKFFLIATLLVIANS. Residue 48–77 participates in FAD binding; it reads DYVIVGGGAAGSVLLDKCISYGYKCTLIER. The active-site Proton acceptor is His-504.

This sequence belongs to the GMC oxidoreductase family. FAD serves as cofactor.

The chain is Putative GMC-type oxidoreductase L128 from Acanthamoeba polyphaga mimivirus (APMV).